The chain runs to 814 residues: Spore development regulator umv1 (814 aa).

6 disordered regions span residues 1-36 (MSRP…GSTE), 96-134 (HDRP…VRRG), 267-333 (QGLK…MPRS), 407-441 (PPRD…RAGP), 457-501 (PVRS…ASLT), and 539-814 (QSSG…NQPY). Positions 7–18 (RSGNASTPQGTS) are enriched in polar residues. In terms of domain architecture, Velvet spans 53–274 (RDHIEYQLTV…AEQGLKVRVR (222 aa)). A compositionally biased stretch (basic residues) spans 271-285 (VRVRKHPRSRRRGSK). Positions 407–423 (PPRDFADGRYMDGDYPP) are enriched in basic and acidic residues. The short motif at 438 to 445 (RAGPSEYS) is the Nuclear localization signal element. The segment covering 620–631 (AAARRSPIPSAR) has biased composition (low complexity). 2 stretches are compositionally biased toward basic and acidic residues: residues 723 to 741 (TRDR…DRDQ) and 760 to 796 (GELD…RRDF). Over residues 800–814 (TMPSKPSSRGHNQPY) the composition is skewed to polar residues.

Belongs to the velvet family. VosA subfamily. As to quaternary structure, forms a heterodimeric complex with velB; the formation of the VEL2-VOS1 complex is light-dependent.

The protein resides in the nucleus. Component of the velB-VosA heterodimeric complex that plays a dual role in activating genes associated with spore maturation and repressing certain development-associated genes. The complex binds DNA through the DNA-binding domain of vosA that recognizes an 11-nucleotide consensus sequence 5'-CTGGCCGCGGC-3' consisting of two motifs in the promoters of key developmental regulatory genes. Required for gall induction and teliospore formation on seedlings. The chain is Spore development regulator umv1 from Mycosarcoma maydis (Corn smut fungus).